The primary structure comprises 515 residues: G-protein coupled receptor 176 (515 aa).

Over 1 to 41 (MGHNSSWVSPNTSHPRNTSGAEAGANLSAFGELSEAQLYRQ) the chain is Extracellular. 4 N-linked (GlcNAc...) asparagine glycosylation sites follow: Asn-4, Asn-11, Asn-17, and Asn-26. The chain crosses the membrane as a helical span at residues 42–64 (FTTTVQVVIFIGSLLGNFMVLWS). Residues 65–77 (TCRTTVFKSVTNR) are Cytoplasmic-facing. Residues 78–98 (FIKNLACSGICASVVCVPFDI) traverse the membrane as a helical segment. Residues 99 to 108 (ILSSSPHCCW) lie on the Extracellular side of the membrane. Residues 109 to 129 (WIYTMLFCKVLKFLHKVFCSV) form a helical membrane-spanning segment. The Cytoplasmic portion of the chain corresponds to 130–157 (TVLSFPAIALDRYYSVLYPLERKISDAK). A helical transmembrane segment spans residues 158 to 177 (SRELVMYIWAHAVVASVPVF). The Extracellular segment spans residues 178 to 204 (AVTNVADIYAMSTCTEVWSNSLGHLVY). A helical transmembrane segment spans residues 205 to 225 (VLIYNVTTVIVPVAVVFLFLI). The Cytoplasmic portion of the chain corresponds to 226–264 (LIRRALSASQKKKVIIAALRTPQNTISIPYASQREAELH). A helical transmembrane segment spans residues 265–285 (ATLLSMVTVFILCSVPYATLV). Residues 286–301 (VYQTVLNVPNTSVFLL) are Extracellular-facing. Residues 302–322 (LTAIWLPKVSLLANPVLFLTV) traverse the membrane as a helical segment. The Cytoplasmic segment spans residues 323–515 (NKSVRKCLVG…KVSIFPKVDS (193 aa)). A disordered region spans residues 407–435 (SCPEGEQEPPQLAPSVPPPGTVDSEPRVS). Residues 417 to 426 (QLAPSVPPPG) are compositionally biased toward pro residues.

Belongs to the G-protein coupled receptor 1 family. As to expression, expressed mainly in the brain, with prominent expression in the SCN (at protein level).

It is found in the cell membrane. Its function is as follows. Orphan receptor involved in normal circadian rhythm behavior. Acts through the G-protein subclass G(z)-alpha and has an agonist-independent basal activity to repress cAMP production. This is G-protein coupled receptor 176 (Gpr176) from Mus musculus (Mouse).